Reading from the N-terminus, the 520-residue chain is Poly(A)-specific ribonuclease PNLDC1 (520 aa).

Mg(2+) is bound by residues D17, E19, D260, and D354. Residues C497–F513 traverse the membrane as a helical segment.

It belongs to the CAF1 family. Mg(2+) is required as a cofactor.

It is found in the endoplasmic reticulum membrane. The enzyme catalyses Exonucleolytic cleavage of poly(A) to 5'-AMP.. In terms of biological role, 3'-exoribonuclease that has a preference for poly(A) tails of mRNAs, thereby efficiently degrading poly(A) tails. Exonucleolytic degradation of the poly(A) tail is often the first step in the decay of eukaryotic mRNAs and is also used to silence certain maternal mRNAs translationally during oocyte maturation and early embryonic development. May act as a regulator of multipotency in embryonic stem cells. Is a critical factor for proper spermatogenesis, involved in pre-piRNAs processing to generate mature piRNAs. This is Poly(A)-specific ribonuclease PNLDC1 from Pongo abelii (Sumatran orangutan).